An 84-amino-acid chain; its full sequence is Large ribosomal subunit protein bL27 (84 aa).

The segment at 1 to 20 is disordered; the sequence is MAHKKGGGSTKNGRDSNPKY.

It belongs to the bacterial ribosomal protein bL27 family.

The chain is Large ribosomal subunit protein bL27 (rpmA) from Prosthecochloris vibrioformis (Chlorobium vibrioforme).